A 589-amino-acid chain; its full sequence is 5'-AMP-activated protein kinase catalytic subunit alpha-1 (589 aa).

The Protein kinase domain occupies 24 to 276 (FVIKETIGKG…VKRIVNHSWF (253 aa)). Residues 30 to 38 (IGKGAFGAV) and Lys-53 each bind ATP. Asp-147 functions as the Proton acceptor in the catalytic mechanism.

This sequence belongs to the protein kinase superfamily. CAMK Ser/Thr protein kinase family. SNF1 subfamily.

The catalysed reaction is L-seryl-[protein] + ATP = O-phospho-L-seryl-[protein] + ADP + H(+). The enzyme catalyses L-threonyl-[protein] + ATP = O-phospho-L-threonyl-[protein] + ADP + H(+). Probably does not act as a sensor that couples lifespan to information about energy levels and insulin-like signals. Together with aak-2, involved in the establishment of germline stem cell (GSC) quiescence during dauer development. Plays a role in the maintenance of glycogen stores which are necessary for resistance to hyperosmotic stress. This chain is 5'-AMP-activated protein kinase catalytic subunit alpha-1 (aak-1), found in Caenorhabditis elegans.